The sequence spans 157 residues: Lipoprotein signal peptidase (157 aa).

Transmembrane regions (helical) follow at residues 10-30 (LVFMGGFFLIFGVDQAIKYAI), 38-58 (SLMVDIVLVFNKGVAFSLLSF), 59-79 (LEGGLKYLQILLILGLFIFLI), and 84-104 (LFKTHAIEFGMVFGAGVSNVL). Residues Asp-114 and Asp-131 contribute to the active site. Residues 122-142 (FDFAIFNFADVMIDVGVGVLL) traverse the membrane as a helical segment.

It belongs to the peptidase A8 family.

The protein resides in the cell inner membrane. It catalyses the reaction Release of signal peptides from bacterial membrane prolipoproteins. Hydrolyzes -Xaa-Yaa-Zaa-|-(S,diacylglyceryl)Cys-, in which Xaa is hydrophobic (preferably Leu), and Yaa (Ala or Ser) and Zaa (Gly or Ala) have small, neutral side chains.. It participates in protein modification; lipoprotein biosynthesis (signal peptide cleavage). In terms of biological role, this protein specifically catalyzes the removal of signal peptides from prolipoproteins. The chain is Lipoprotein signal peptidase from Helicobacter pylori (strain HPAG1).